We begin with the raw amino-acid sequence, 103 residues long: Nucleoid-associated protein Cgl0243/cg0297 (103 aa).

The protein belongs to the YbaB/EbfC family. Homodimer.

It is found in the cytoplasm. It localises to the nucleoid. Its function is as follows. Binds to DNA and alters its conformation. May be involved in regulation of gene expression, nucleoid organization and DNA protection. The protein is Nucleoid-associated protein Cgl0243/cg0297 of Corynebacterium glutamicum (strain ATCC 13032 / DSM 20300 / JCM 1318 / BCRC 11384 / CCUG 27702 / LMG 3730 / NBRC 12168 / NCIMB 10025 / NRRL B-2784 / 534).